The primary structure comprises 384 residues: Probable protein phosphatase 2C 42 (384 aa).

The region spanning 58–358 (DFSMAVIQAN…DDITVIVVFL (301 aa)) is the PPM-type phosphatase domain. Residues aspartate 89, glycine 90, aspartate 290, and aspartate 349 each contribute to the Mn(2+) site.

Belongs to the PP2C family. Mg(2+) serves as cofactor. Mn(2+) is required as a cofactor.

It carries out the reaction O-phospho-L-seryl-[protein] + H2O = L-seryl-[protein] + phosphate. The catalysed reaction is O-phospho-L-threonyl-[protein] + H2O = L-threonyl-[protein] + phosphate. In terms of biological role, dephosphorylates and represses plasma membrane H(+)-ATPases (PM H(+)-ATPases, e.g. AHA1 and AHA2), thus influencing negatively plant growth and fitness. Promotes the apical hook maintenance of etiolated seedlings. This Arabidopsis thaliana (Mouse-ear cress) protein is Probable protein phosphatase 2C 42.